The following is a 238-amino-acid chain: Small ribosomal subunit protein uS3 (238 aa).

Residues isoleucine 39–lysine 108 enclose the KH type-2 domain.

Belongs to the universal ribosomal protein uS3 family. As to quaternary structure, part of the 30S ribosomal subunit. Forms a tight complex with proteins S10 and S14.

Binds the lower part of the 30S subunit head. Binds mRNA in the 70S ribosome, positioning it for translation. In Alkaliphilus oremlandii (strain OhILAs) (Clostridium oremlandii (strain OhILAs)), this protein is Small ribosomal subunit protein uS3.